A 248-amino-acid chain; its full sequence is Probable transcriptional regulatory protein M446_6579 (248 aa).

The protein belongs to the TACO1 family.

Its subcellular location is the cytoplasm. This chain is Probable transcriptional regulatory protein M446_6579, found in Methylobacterium sp. (strain 4-46).